The primary structure comprises 274 residues: Undecaprenyl-diphosphatase (274 aa).

The next 7 helical transmembrane spans lie at 21–39 (FLPI…LLGF), 44–64 (AQVF…LVYW), 85–105 (FNLA…GKAI), 109–129 (LFTP…ILWA), 185–205 (ATDF…VYSL), 214–234 (VADL…AWLC), and 247–267 (FVPF…TAST).

This sequence belongs to the UppP family.

The protein resides in the cell inner membrane. The catalysed reaction is di-trans,octa-cis-undecaprenyl diphosphate + H2O = di-trans,octa-cis-undecaprenyl phosphate + phosphate + H(+). Catalyzes the dephosphorylation of undecaprenyl diphosphate (UPP). Confers resistance to bacitracin. The protein is Undecaprenyl-diphosphatase of Verminephrobacter eiseniae (strain EF01-2).